We begin with the raw amino-acid sequence, 608 residues long: ATM1-type heavy metal exporter (608 aa).

The Cytoplasmic portion of the chain corresponds to 1 to 38; that stretch reads MPPETATNPKDARHDGWQTLKRFLPYLWPADNAVLRRR. Residues 39-60 traverse the membrane as a helical segment; sequence VVGAILMVLLGKATTLALPFAY. Residues 39-327 enclose the ABC transmembrane type-1 domain; sequence VVGAILMVLL…LGMVYRTIRQ (289 aa). Residues 61 to 82 are Periplasmic-facing; the sequence is KKAVDAMTLGGGAQPALTVALA. Residues 83–105 form a helical membrane-spanning segment; it reads FVLAYALGRFSGVLFDNLRNIVF. Residues 106 to 154 are Cytoplasmic-facing; that stretch reads ERVGQDATRHLAENVFARLHKLSLRFHLARRTGEVTKVIERGTKSIDTM. Residues 155–178 form a helical membrane-spanning segment; it reads LYFLLFNIAPTVIELTAVIVIFWL. Asparagine 179 is a topological domain (periplasmic). A helical transmembrane segment spans residues 180-202; it reads FGLGLVTATILAVIAYVWTTRTI. Topologically, residues 203 to 266 are cytoplasmic; the sequence is TEWRTHLREK…AAVKSENSLG (64 aa). Residues 206–210 and 269–272 each bind glutathione; these read RTHLR and NIAQ. The chain crosses the membrane as a helical span at residues 267–285; sequence LLNIAQALIVNLLMAGAMA. Residues 286–300 are Periplasmic-facing; it reads WTVYGWSQGKLTVGD. A helical transmembrane segment spans residues 301 to 322; that stretch reads LVFVNTYLTQLFRPLDMLGMVY. Glutathione is bound at residue 316 to 319; that stretch reads DMLG. The Cytoplasmic portion of the chain corresponds to 323–608; sequence RTIRQGLIDM…ESAEVSEAAE (286 aa). Residues 361-595 enclose the ABC transporter domain; the sequence is VTFDNVVFGY…DGLYAEMWAR (235 aa). Residues tyrosine 370 and 394–405 each bind ATP; that span reads GPSGAGKSTIAR.

It belongs to the ABC transporter superfamily. ABCB family. Heavy Metal importer (TC 3.A.1.210) subfamily. In terms of assembly, homodimer.

The protein localises to the cell inner membrane. Its function is as follows. Mediates the ATP-dependent export of glutathione-conjugated substrates, such as heavy metal-glutathione conjugates. ATP hydrolysis is stimulated by glutathione binding. Protects cells against toxic heavy metal ions, such as silver and mercury ions. May also mediate the transport of glutathione-conjugated aromatic hydrocarbons, such as dinitrobenzene. The sequence is that of ATM1-type heavy metal exporter (atm1) from Novosphingobium aromaticivorans (strain ATCC 700278 / DSM 12444 / CCUG 56034 / CIP 105152 / NBRC 16084 / F199).